The sequence spans 137 residues: ATP synthase epsilon chain (137 aa).

Belongs to the ATPase epsilon chain family. In terms of assembly, F-type ATPases have 2 components, CF(1) - the catalytic core - and CF(0) - the membrane proton channel. CF(1) has five subunits: alpha(3), beta(3), gamma(1), delta(1), epsilon(1). CF(0) has three main subunits: a, b and c.

It is found in the cell inner membrane. Produces ATP from ADP in the presence of a proton gradient across the membrane. This is ATP synthase epsilon chain from Pseudoalteromonas atlantica (strain T6c / ATCC BAA-1087).